Reading from the N-terminus, the 351-residue chain is Anthranilate phosphoribosyltransferase (351 aa).

5-phospho-alpha-D-ribose 1-diphosphate is bound by residues glycine 80, 83–84 (GD), threonine 88, 90–93 (NIST), 108–116 (KHGNRSVTS), and serine 120. Glycine 80 provides a ligand contact to anthranilate. Residue serine 92 participates in Mg(2+) binding. Position 111 (asparagine 111) interacts with anthranilate. An anthranilate-binding site is contributed by arginine 166. Aspartate 229 and glutamate 230 together coordinate Mg(2+).

This sequence belongs to the anthranilate phosphoribosyltransferase family. As to quaternary structure, homodimer. Mg(2+) is required as a cofactor.

The enzyme catalyses N-(5-phospho-beta-D-ribosyl)anthranilate + diphosphate = 5-phospho-alpha-D-ribose 1-diphosphate + anthranilate. It participates in amino-acid biosynthesis; L-tryptophan biosynthesis; L-tryptophan from chorismate: step 2/5. Functionally, catalyzes the transfer of the phosphoribosyl group of 5-phosphorylribose-1-pyrophosphate (PRPP) to anthranilate to yield N-(5'-phosphoribosyl)-anthranilate (PRA). This chain is Anthranilate phosphoribosyltransferase, found in Chlorobium phaeovibrioides (strain DSM 265 / 1930) (Prosthecochloris vibrioformis (strain DSM 265)).